The following is a 445-amino-acid chain: DDB1- and CUL4-associated factor 13 (445 aa).

WD repeat units follow at residues 64-104, 107-146, 152-191, 194-234, 236-276, 280-319, and 323-362; these read GHRD…CSRT, AHDG…YGEK, TILG…PMRS, WGVD…PLKK, ILEM…SPVK, DHVS…SREV, and KRMQ…KLGV. The tract at residues 353–441 is required for nucleolar location; the sequence is KANASEKLGV…IPSEKKKHVL (89 aa). Composition is skewed to basic residues over residues 413 to 426 and 436 to 445; these read ARRK…KHSK and KKKHVLAVVE. Residues 413–445 form a disordered region; it reads ARRKKDVNRRKHSKPGSVPIPSEKKKHVLAVVE.

Belongs to the WD repeat DCAF13/WDSOF1 family. Part of the small subunit (SSU) processome, composed of more than 70 proteins and the RNA chaperone small nucleolar RNA (snoRNA) U3. Component of the DCX(DCAF13) E3 ubiquitin ligase complex, at least composed of CUL4 (CUL4A or CUL4B), DDB1, DCAF13 and RBX1.

The protein localises to the nucleus. It localises to the nucleolus. It participates in protein modification; protein ubiquitination. Its function is as follows. Part of the small subunit (SSU) processome, first precursor of the small eukaryotic ribosomal subunit. During the assembly of the SSU processome in the nucleolus, many ribosome biogenesis factors, an RNA chaperone and ribosomal proteins associate with the nascent pre-rRNA and work in concert to generate RNA folding, modifications, rearrangements and cleavage as well as targeted degradation of pre-ribosomal RNA by the RNA exosome. In terms of biological role, substrate-recognition component of a DCX (DDB1-CUL4-X-box) E3 ubiquitin-protein ligase complex. This chain is DDB1- and CUL4-associated factor 13 (dcaf13), found in Xenopus laevis (African clawed frog).